The sequence spans 364 residues: Uroporphyrinogen decarboxylase (364 aa).

Residues 28-32 (RQAGR), Asp78, Tyr160, Thr215, and His333 contribute to the substrate site.

Belongs to the uroporphyrinogen decarboxylase family. In terms of assembly, homodimer.

It is found in the cytoplasm. It catalyses the reaction uroporphyrinogen III + 4 H(+) = coproporphyrinogen III + 4 CO2. It functions in the pathway porphyrin-containing compound metabolism; protoporphyrin-IX biosynthesis; coproporphyrinogen-III from 5-aminolevulinate: step 4/4. Functionally, catalyzes the decarboxylation of four acetate groups of uroporphyrinogen-III to yield coproporphyrinogen-III. The protein is Uroporphyrinogen decarboxylase of Burkholderia cenocepacia (strain ATCC BAA-245 / DSM 16553 / LMG 16656 / NCTC 13227 / J2315 / CF5610) (Burkholderia cepacia (strain J2315)).